Here is a 538-residue protein sequence, read N- to C-terminus: MAVISKKIPAPDKVEIKTALLSVFDKTGIVELAQALSERGVRLLSTGGTYKAIATAGLAVTDVSDITGFPEIMDGRVKTLHPTVHGGLLAIRDDSEHQEAMKKHGIEGIDLAVINLYPFEEVRAAGGDYPTTVENIDIGGPAMIRASAKNHAYVTILTDPNDYAEFKEQLSADAGKTAYAFRQRMAAKAYARTAAYDAAISNWFAEALSIDAPRHRVIGGVLKEEMRYGENPHQKAAFYVTGEKRPGVSTAVLLQGKQLSYNNINDTDAAYELVAEFLPEKAPACAIIKHANPCGVATGSSLVEAYRRALACDSVSAFGGIIALNQILDAETAEEIVKLFTEVIIAPDVTEEAKAIVVRKPNLRLLSAGGLPDPRVAGLTAKTVSGGLLVQSRDNGMVEDLELKVVTKRAPTSQELEDMKFAFKVGKHVKSNAVVYAKDGQTAGIGAGQMSRVDSARIAALKAEEAAKALGLAVPMTKGSAVASEAFLPFADGLLSMIAAGATAVIQPGGSMRDQEVIDAANEHGIAMVFTGMRHFRH.

An MGS-like domain is found at 8-158 (IPAPDKVEIK…KNHAYVTILT (151 aa)).

This sequence belongs to the PurH family.

It catalyses the reaction (6R)-10-formyltetrahydrofolate + 5-amino-1-(5-phospho-beta-D-ribosyl)imidazole-4-carboxamide = 5-formamido-1-(5-phospho-D-ribosyl)imidazole-4-carboxamide + (6S)-5,6,7,8-tetrahydrofolate. It carries out the reaction IMP + H2O = 5-formamido-1-(5-phospho-D-ribosyl)imidazole-4-carboxamide. It functions in the pathway purine metabolism; IMP biosynthesis via de novo pathway; 5-formamido-1-(5-phospho-D-ribosyl)imidazole-4-carboxamide from 5-amino-1-(5-phospho-D-ribosyl)imidazole-4-carboxamide (10-formyl THF route): step 1/1. It participates in purine metabolism; IMP biosynthesis via de novo pathway; IMP from 5-formamido-1-(5-phospho-D-ribosyl)imidazole-4-carboxamide: step 1/1. The chain is Bifunctional purine biosynthesis protein PurH from Rhizobium etli (strain CIAT 652).